A 302-amino-acid chain; its full sequence is Protein translocase subunit SecF (302 aa).

Helical transmembrane passes span 12-32 (FFIY…FVKG), 138-158 (YAWY…TIRF), 166-186 (AILA…LFGI), 190-210 (LTAI…TIVV), 249-269 (FLVV…FAFG), and 272-292 (VGVI…VIGM).

This sequence belongs to the SecD/SecF family. SecF subfamily. In terms of assembly, forms a complex with SecD. Part of the essential Sec protein translocation apparatus which comprises SecA, SecYEG and auxiliary proteins SecDF. Other proteins may also be involved.

Its subcellular location is the cell inner membrane. Its function is as follows. Part of the Sec protein translocase complex. Interacts with the SecYEG preprotein conducting channel. SecDF uses the proton motive force (PMF) to complete protein translocation after the ATP-dependent function of SecA. The polypeptide is Protein translocase subunit SecF (Petrotoga mobilis (strain DSM 10674 / SJ95)).